An 853-amino-acid chain; its full sequence is cGMP-dependent protein kinase (853 aa).

Residues Met1–Asp29 are autoinhibitory segment. CNMP-binding domain regions lie at residues Val58–Ser173, Val176–Gly275, Ile295–Asn398, and Ile418–Ile517. 3',5'-cyclic GMP-binding residues include Lys113, Gly122, Glu123, Ala125, Arg132, and Ser133. Residues Arg473, Gly482, Glu483, Ala485, Arg492, and Thr493 each coordinate 3',5'-cyclic GMP. The Protein kinase domain occupies Leu541–Phe798. Residues Ile547–Val555 and Lys570 contribute to the ATP site. Asp664 serves as the catalytic Proton acceptor. In terms of domain architecture, AGC-kinase C-terminal spans Ser799–Phe853. The interval Asp827 to Phe853 is disordered. A compositionally biased stretch (acidic residues) spans Glu832–Phe853.

It belongs to the protein kinase superfamily. AGC Ser/Thr protein kinase family. cGMP subfamily. In terms of assembly, monomer. Requires Mg(2+) as cofactor. Post-translationally, autophosphorylated.

The protein resides in the cytoplasm. The protein localises to the endoplasmic reticulum membrane. The enzyme catalyses L-seryl-[protein] + ATP = O-phospho-L-seryl-[protein] + ADP + H(+). It carries out the reaction L-threonyl-[protein] + ATP = O-phospho-L-threonyl-[protein] + ADP + H(+). Activated by cGMP. Not activated by cAMP. cGMP binding allosterically triggers a conformational change at the alpha C-helix of cGMP-binding domain 4, which bridges the regulatory and catalytic domains, causing the capping triad, composed of Arg-484, Gln-532 and Asp-533, to form and stabilize the active conformation. The cGMP-binding domains acts cooperatively to activate PKG. Its function is as follows. Serine/threonine protein kinase which acts as a downstream effector of the second messenger cGMP. Controls the release of Ca(2+) from intracellular stores by regulating phosphoinositide biosynthesis. Ca(2+) signals are essential for merozoite and sporozoite invasion and egress from host hepatocytes and erythrocytes, and, in the mosquito vector, for gametocyte activation, and ookinete and sporozoite motility. During the host liver stage, regulates the initial invasion of host hepatocytes by sporozoites by regulating sporozoite motility and microneme exocytosis. Following parasite development in the hepatocytes, required for the release of merosomes, a vesicle containing the mature merozoites. During the asexual blood stage, required for the progression from schizont to the ring stage following merozoite invasion of host erythrocytes and for merozoite egress. Regulates merozoite egress by promoting the release of exonemes and micronemes which contain proteins essential for egress. Phosphorylates CDPK1 predominantly at the late schizont stage; phosphorylation at 'Ser-64' regulates CDPK1 protein-protein interaction and phosphorylation at 'Thr-231' may regulate CDPK1 kinase activity. In the mosquito vector, required for the initiation of gametogenesis induced by xanthurenic acid, specifically the gametocyte differentiation from the crescent-shaped form to the spherical form. Required for the gliding motility of ookinetes to reach and penetrate the midgut epithelium by promoting Ca(2+)-mediated activation of CDPK1 and CDPK4. Also required for microneme secretion in ookinete by promoting Ca(2+)-mediated activation of CDPK3. This Plasmodium falciparum (isolate NF54) protein is cGMP-dependent protein kinase.